The chain runs to 435 residues: Ribulose bisphosphate carboxylase/oxygenase activase 2, chloroplastic (435 aa).

The N-terminal 56 residues, 1–56 (MAAAYSTVGAVNRAPLSLNGSGARASLVPSTAFFGSSLKKSAAKFPKASSGNFKIV), are a transit peptide targeting the chloroplast. 165-172 (GGKGQGKS) is a binding site for ATP.

It belongs to the RuBisCO activase family.

It is found in the plastid. The protein resides in the chloroplast stroma. In terms of biological role, activation of RuBisCO (ribulose-1,5-bisphosphate carboxylase/oxygenase; EC 4.1.1.39) involves the ATP-dependent carboxylation of the epsilon-amino group of lysine leading to a carbamate structure. The protein is Ribulose bisphosphate carboxylase/oxygenase activase 2, chloroplastic (RCA2) of Larrea tridentata (Creosote bush).